A 1113-amino-acid chain; its full sequence is Potassium channel subfamily U member 1 (1113 aa).

Residues 1 to 24 (MSQTLLDNLNKKELTETSCTIEIQ) are Extracellular-facing. The helical transmembrane segment at 25-45 (AAFILSSLATFFGGLIVLFIF) threads the bilayer. At 46–101 (RIALKISRNWKTVKGPRGILELFSSRRIEVNPLRKLYFHGVFRERIEMLLSAQTIV) the chain is on the cytoplasmic side. A helical transmembrane segment spans residues 102 to 122 (GQVLVILVFVLSIGSLVIYFI). Topologically, residues 123–137 (NSMDPVRKCSSYEDK) are extracellular. A helical membrane pass occupies residues 138-158 (IVHVDLSFNAFFSFYFGLRFW). Topologically, residues 159-165 (AAEDKIK) are cytoplasmic. The chain crosses the membrane as a helical span at residues 166-186 (FWLEMNSIVDIFTIPPTFISY). Topologically, residues 187–188 (YL) are extracellular. A helical; Voltage-sensor membrane pass occupies residues 189-209 (KSNWLGLRFLRALRLLELPKI). The Cytoplasmic portion of the chain corresponds to 210 to 226 (LQILQVIKTSNSVKLSK). A helical transmembrane segment spans residues 227-247 (LMSIVISTWFTAAGFLHLVEN). Topologically, residues 248–259 (SGDPWLNGRNSQ) are extracellular. An intramembrane region (pore-forming) is located at residues 260 to 282 (TMSYFESIYLVTATMSTVGFGDV). Topologically, residues 283 to 290 (VAKTSLGR) are extracellular. Residues 291–311 (IFIVFFTLGSLILFANYIPEM) form a helical membrane-spanning segment. At 312–1113 (VELFSTRKKY…FDASDIDPGK (802 aa)) the chain is on the cytoplasmic side. RCK N-terminal domains follow at residues 331–473 (KKFI…DNII) and 710–881 (QNHI…DEAI). Residues 1047–1081 (ASIQDQDTTTNVTSMSQGSNFQGAQSALNEHSLSP) are compositionally biased toward polar residues. The interval 1047-1091 (ASIQDQDTTTNVTSMSQGSNFQGAQSALNEHSLSPASAMGEKKSP) is disordered.

The protein belongs to the potassium channel family. Calcium-activated (TC 1.A.1.3) subfamily. KCa1.1/KCNMA1 sub-subfamily. Homotetramer; which constitutes the activated potassium channel. Interacts with LRRC52; this interaction changes channel gating properties, such as shifting gating to more negative potentials at a given pH.

The protein localises to the cell membrane. The protein resides in the cell projection. Its subcellular location is the cilium. It localises to the flagellum membrane. It carries out the reaction K(+)(in) = K(+)(out). Its activity is regulated as follows. Regulated by changes in cytosolic pH; activated by alkalization. Not activated by intracellular Ca(2+). VU0546110 acts as a selective inhibitor. The auxiliary subunit LRRC52 shifts the activation of KCNU1 to more negative potentials at a given pH. Testis-specific potassium channel activated by both intracellular pH and membrane voltage that mediates export of K(+). Represents the primary spermatozoan K(+) current. The channel underlies a pH-triggered membrane hyperpolarization during the process of sperm capacitation, as sperm encounter the alkaline environment near the ovum in the female reproductive tract, thereby playing an essential for male fertility. The polypeptide is Potassium channel subfamily U member 1 (Kcnu1) (Rattus norvegicus (Rat)).